A 462-amino-acid polypeptide reads, in one-letter code: Bifunctional enzyme LpxC/FabZ (462 aa).

Positions methionine 1–lysine 302 are UDP-3-O-acyl-N-acetylglucosamine deacetylase. 3 residues coordinate Zn(2+): histidine 78, histidine 260, and aspartate 264. The active-site Proton donor is the histidine 287. Residues glutamine 303 to glutamate 462 are 3-hydroxyacyl-[acyl-carrier-protein] dehydratase. Histidine 364 is a catalytic residue.

This sequence in the N-terminal section; belongs to the LpxC family. It in the C-terminal section; belongs to the thioester dehydratase family. It depends on Zn(2+) as a cofactor.

The protein resides in the cytoplasm. It catalyses the reaction a UDP-3-O-[(3R)-3-hydroxyacyl]-N-acetyl-alpha-D-glucosamine + H2O = a UDP-3-O-[(3R)-3-hydroxyacyl]-alpha-D-glucosamine + acetate. The enzyme catalyses a (3R)-hydroxyacyl-[ACP] = a (2E)-enoyl-[ACP] + H2O. It functions in the pathway glycolipid biosynthesis; lipid IV(A) biosynthesis; lipid IV(A) from (3R)-3-hydroxytetradecanoyl-[acyl-carrier-protein] and UDP-N-acetyl-alpha-D-glucosamine: step 2/6. Its function is as follows. Catalyzes the hydrolysis of UDP-3-O-myristoyl-N-acetylglucosamine to form UDP-3-O-myristoylglucosamine and acetate, the committed step in lipid A biosynthesis. Involved in unsaturated fatty acids biosynthesis. Catalyzes the dehydration of short chain beta-hydroxyacyl-ACPs and long chain saturated and unsaturated beta-hydroxyacyl-ACPs. The protein is Bifunctional enzyme LpxC/FabZ (lpxC/fabZ) of Porphyromonas gingivalis (strain ATCC BAA-308 / W83).